We begin with the raw amino-acid sequence, 142 residues long: Small ribosomal subunit protein bS16 (142 aa).

Positions 88–142 (GAEGTLRQPEGKTPFVAPDNGSVIIPEAITPKAEKAEEAPAEDAAPAEDDAEKAE) are disordered. Positions 126 to 142 (APAEDAAPAEDDAEKAE) are enriched in acidic residues.

This sequence belongs to the bacterial ribosomal protein bS16 family.

This chain is Small ribosomal subunit protein bS16, found in Kocuria rhizophila (strain ATCC 9341 / DSM 348 / NBRC 103217 / DC2201).